A 353-amino-acid chain; its full sequence is uncharacterized protein (353 aa).

Zn(2+) is bound by residues C40, H70, C100, C103, C106, C114, and C158.

It belongs to the zinc-containing alcohol dehydrogenase family. It depends on Zn(2+) as a cofactor.

This is an uncharacterized protein from Escherichia coli (strain K12).